Consider the following 433-residue polypeptide: uncharacterized protein (433 aa).

It belongs to the mimivirus R160 family.

The protein localises to the virion. This is an uncharacterized protein from Acanthamoeba polyphaga mimivirus (APMV).